The sequence spans 135 residues: Helix-loop-helix protein 2 (135 aa).

The tract at residues 1–80 (MMLSPDQAAD…RRRATAKYRS (80 aa)) is disordered. Basic and acidic residues predominate over residues 10-21 (DSDHPSSAHSDP). Basic residues predominate over residues 68–80 (KRRRRRATAKYRS). Residues 77 to 129 (KYRSAHATRERIRVEAFNLAFAELRKLLPTLPPDKKLSKIEILRLAICYISYL) form the bHLH domain.

In terms of assembly, homodimer. Interacts and may form heterodimers with STAT3.

The protein localises to the nucleus. In terms of biological role, transcription factor which binds the E box motif 5'-CA[TC][AG]TG-3'. Involved in regulating energy expenditure, body mass, voluntary physical activity, mating behavior and reproductive longevity, acting through the hypothalamic-pituitary-gonadal axis. Acts as a transcriptional activator of target genes, including NDN, PCSK1, MC4R. Is also a transcriptional activator of KISS1. May act centrally to regulate function of both white and brown adipose tissue. Together with NHLH1, required to maintain migration and survival of cells in the anterior extramural migration stream (aes), which forms the precerebellar nuclei. Also, in concert with NHLH1, may determine fate of gonadotropin releasing hormone-1 (GnRH-1) neurons. The chain is Helix-loop-helix protein 2 (NHLH2) from Homo sapiens (Human).